A 664-amino-acid polypeptide reads, in one-letter code: Ubiquinol oxidase subunit 1 (664 aa).

2 consecutive transmembrane segments (helical) span residues 15-35 and 57-77; these read PILV…LGLI and LAAM…ADAI. Residue histidine 106 coordinates heme b. 12 helical membrane passes run 109 to 129, 136 to 156, 190 to 210, 233 to 253, 278 to 298, 316 to 336, 347 to 367, 383 to 403, 414 to 434, 456 to 476, 490 to 510, and 603 to 623; these read IMIF…IVPL, VAFP…FILV, YIWA…NFFV, LCAS…VGLL, LIWA…FGVF, MVYA…HHFF, FFGI…FNWL, WAVG…MLAI, LFLI…GYIC, AFWF…IVGF, AWHP…LGIA, and ALIF…VGLV. Histidine 284, tyrosine 288, histidine 333, and histidine 334 together coordinate Cu cation. Residues 284–288 constitute a cross-link (1'-histidyl-3'-tyrosine (His-Tyr)); sequence HPEVY. Histidine 419 lines the Fe(II)-heme a pocket. Histidine 421 provides a ligand contact to heme b.

This sequence belongs to the heme-copper respiratory oxidase family. As to quaternary structure, heterotetramer of the subunits 1, 2, 3 and 4.

It is found in the cell membrane. Catalytic subunit of the enzyme. Electrons originating in a quinol are transferred to the bimetallic center formed by heme a and copper B. The sequence is that of Ubiquinol oxidase subunit 1 (cyaA) from Acetobacter aceti.